The primary structure comprises 687 residues: Elongation factor G (687 aa).

In terms of domain architecture, tr-type G spans 8-282 (NKFRNIGIMA…AVLAYLPSPL (275 aa)). GTP-binding positions include 17–24 (AHIDAGKT), 81–85 (DTPGH), and 135–138 (NKMD).

It belongs to the TRAFAC class translation factor GTPase superfamily. Classic translation factor GTPase family. EF-G/EF-2 subfamily.

The protein localises to the cytoplasm. In terms of biological role, catalyzes the GTP-dependent ribosomal translocation step during translation elongation. During this step, the ribosome changes from the pre-translocational (PRE) to the post-translocational (POST) state as the newly formed A-site-bound peptidyl-tRNA and P-site-bound deacylated tRNA move to the P and E sites, respectively. Catalyzes the coordinated movement of the two tRNA molecules, the mRNA and conformational changes in the ribosome. The protein is Elongation factor G of Clostridium novyi (strain NT).